Here is a 491-residue protein sequence, read N- to C-terminus: Cytochrome P450 2F2 (491 aa).

C436 serves as a coordination point for heme.

This sequence belongs to the cytochrome P450 family. Heme serves as cofactor.

It localises to the endoplasmic reticulum membrane. It is found in the microsome membrane. Involved in the regio- and stereoselective transformation of naphthalene to trans-1R-hydroxy-2R-glutathionyl-1,2-dihydronaphthalene in the presence of glutathione and glutathione S-transferases. It specifically catalyzes the production of a very reactive and potentially toxic intermediate, the 2R,2S arene oxide, that is associated with necrosis of the unciliated bronchiolar epithelial cells or club cells in lung. This is Cytochrome P450 2F2 (Cyp2f2) from Rattus norvegicus (Rat).